We begin with the raw amino-acid sequence, 374 residues long: Chaperone protein DnaJ (374 aa).

In terms of domain architecture, J spans 5-70; the sequence is DYYDVLGVAK…DKRAAYDRFG (66 aa). A CR-type zinc finger spans residues 131 to 209; sequence GCEEKIRIPT…CHGQGRVQEY (79 aa). Positions 144, 147, 161, 164, 183, 186, 197, and 200 each coordinate Zn(2+). CXXCXGXG motif repeat units lie at residues 144 to 151, 161 to 168, 183 to 190, and 197 to 204; these read CKTCDGSG, CGTCGGAG, CPECHGAG, and CRDCHGQG.

Belongs to the DnaJ family. As to quaternary structure, homodimer. Zn(2+) serves as cofactor.

Its subcellular location is the cytoplasm. In terms of biological role, participates actively in the response to hyperosmotic and heat shock by preventing the aggregation of stress-denatured proteins and by disaggregating proteins, also in an autonomous, DnaK-independent fashion. Unfolded proteins bind initially to DnaJ; upon interaction with the DnaJ-bound protein, DnaK hydrolyzes its bound ATP, resulting in the formation of a stable complex. GrpE releases ADP from DnaK; ATP binding to DnaK triggers the release of the substrate protein, thus completing the reaction cycle. Several rounds of ATP-dependent interactions between DnaJ, DnaK and GrpE are required for fully efficient folding. Also involved, together with DnaK and GrpE, in the DNA replication of plasmids through activation of initiation proteins. The chain is Chaperone protein DnaJ from Marinomonas sp. (strain MWYL1).